Here is a 125-residue protein sequence, read N- to C-terminus: MIRNIIITISAILLLTSKGFADDTISNTSKKDTKTDITTQKILDEFYAYAGTIKPEIREEIQKYRVEIVNINKKKRELYDKLSKEAQNFLAKEQEYKQRLSSSSMATEDSKDNNTAKDNKDADKK.

Positions M1–A21 are cleaved as a signal peptide. Positions K54 to S102 form a coiled coil. Residues Y96–K125 are disordered. Basic and acidic residues predominate over residues E108 to K125.

This is an uncharacterized protein from Rickettsia bellii (strain RML369-C).